A 284-amino-acid chain; its full sequence is UPF0761 membrane protein IL2447 (284 aa).

Helical transmembrane passes span 41–61 (MLSL…FPMF), 98–118 (MTAI…SAID), 137–157 (FAVY…GLAA), 178–198 (FVLW…MYQL), 214–234 (VIAA…ITFF), and 247–267 (IPIL…GAVL).

This sequence belongs to the UPF0761 family.

It localises to the cell inner membrane. The protein is UPF0761 membrane protein IL2447 of Idiomarina loihiensis (strain ATCC BAA-735 / DSM 15497 / L2-TR).